A 47-amino-acid polypeptide reads, in one-letter code: Large ribosomal subunit protein bL27c (47 aa).

The tract at residues 1–21 is disordered; the sequence is STKNGRDSNAQRLGVKKYGGE.

It belongs to the bacterial ribosomal protein bL27 family.

The protein resides in the plastid. The protein localises to the chloroplast. The sequence is that of Large ribosomal subunit protein bL27c (rpl27) from Porphyridium purpureum (Red alga).